The following is a 431-amino-acid chain: Adenylosuccinate synthetase (431 aa).

GTP is bound by residues 13–19 (GDEGKGK) and 41–43 (GHT). D14 serves as the catalytic Proton acceptor. Mg(2+) is bound by residues D14 and G41. IMP contacts are provided by residues 14–17 (DEGK), 39–42 (NAGH), T130, R144, Q225, T240, and R306. H42 functions as the Proton donor in the catalytic mechanism. Substrate is bound at residue 302 to 308 (ATTGRQR). GTP contacts are provided by residues R308, 334–336 (KLD), and 416–418 (STG).

This sequence belongs to the adenylosuccinate synthetase family. As to quaternary structure, homodimer. The cofactor is Mg(2+).

It localises to the cytoplasm. It catalyses the reaction IMP + L-aspartate + GTP = N(6)-(1,2-dicarboxyethyl)-AMP + GDP + phosphate + 2 H(+). It functions in the pathway purine metabolism; AMP biosynthesis via de novo pathway; AMP from IMP: step 1/2. Functionally, plays an important role in the de novo pathway of purine nucleotide biosynthesis. Catalyzes the first committed step in the biosynthesis of AMP from IMP. The sequence is that of Adenylosuccinate synthetase from Halorhodospira halophila (strain DSM 244 / SL1) (Ectothiorhodospira halophila (strain DSM 244 / SL1)).